A 590-amino-acid chain; its full sequence is MRTRFLFLTSGCKAVPELHKIVLANAAPVKNPEIRYASTENRNYYITTPIFYVNASPHLGHLYSAVIADCFHRHKQLQGFNSRFATGTDEHGLKIQQAAEAAGKEPLEFCTTVSERFRHLFSSCNISNTDYIRTTEQRHHRAVQHFWSVLCSKGLIYKGSYEGWYSTQDESFLTPSQVTTALDSTGKEIKVSLESGHKVEWMKEENYMFRLSGFRSQLLDWLRENPRAIQPERFHHSVLQWLQEELPDLSVSRQKSRLQWGIPVPEDDGQTIYVWLDALVNYLTVVGYPNNHERWWNVAHHIIGKDILKFHAIYWPSFLLGAGLPLPQTIHVHSHWTVAGKKMSKSLGNVIDPQERSQLFTTDGLRYFLLRQGVPDTDCDYRDDKVVKLLNAELADALGGLLNRCTATALNPAQVYASFCPDSFPRERGGRADDDDYRMLESVRHLPAVVEQHFEDMHVYKALEAVSTCVRQTNGFVQRHAPWKLDRKDSADQRWLGTIIHVSLECLRIYGTLLQPVVPEISNKLLSRLGVQPHERSWTNLNFLPRFEGKDCPFEGRALGSDSGVLFSRLESQRADQQKNRKMEKGSNLK.

A mitochondrion-targeting transit peptide spans 1–26 (MRTRFLFLTSGCKAVPELHKIVLANA). Residues 51-61 (FYVNASPHLGH) carry the 'HIGH' region motif. The 'KMSKS' region motif lies at 342 to 346 (KMSKS). ATP is bound at residue Lys345. The disordered stretch occupies residues 570-590 (LESQRADQQKNRKMEKGSNLK). Over residues 571 to 590 (ESQRADQQKNRKMEKGSNLK) the composition is skewed to basic and acidic residues.

It belongs to the class-I aminoacyl-tRNA synthetase family.

The protein localises to the mitochondrion matrix. It catalyses the reaction tRNA(Met) + L-methionine + ATP = L-methionyl-tRNA(Met) + AMP + diphosphate. The chain is Methionine--tRNA ligase, mitochondrial (mars2) from Takifugu rubripes (Japanese pufferfish).